We begin with the raw amino-acid sequence, 221 residues long: Ependymin-2 (221 aa).

A signal peptide spans 1–21; sequence MQDFAFAALSIWLCLGATALA. N-linked (GlcNAc...) asparagine glycosylation is found at Asn-33, Asn-73, and Asn-97.

Belongs to the ependymin family. In terms of processing, binds calcium through the terminal sialic acids. As to expression, EPDs are synthesized in the meninx and secreted in the cerebrospinal fluid.

The protein resides in the secreted. Its function is as follows. May play a role in neural plasticity. May be involved during axon regeneration. The chain is Ependymin-2 (epd2) from Salmo salar (Atlantic salmon).